Consider the following 253-residue polypeptide: Bridging integrator 3 (253 aa).

Positions 9–232 (GQPKKQIVSK…LDQPGHSDEH (224 aa)) constitute a BAR domain. Coiled-coil stretches lie at residues 16-57 (VSKT…AMSK) and 120-151 (SLNM…KEKT).

The protein resides in the cytoplasm. It localises to the cytoskeleton. Involved in cytokinesis and septation where it has a role in the localization of F-actin. The polypeptide is Bridging integrator 3 (Bin3) (Rattus norvegicus (Rat)).